The chain runs to 394 residues: MAKAKFERTKPHVNIGTIGHVDHGKTSLTAAITIVLAKTGGAQATAYDQIDAAPEEKERGITISTAHVEYETKNRHYAHVDCPGHADYVKNMITGAAQMDGAILVVSAADGPMPQTREHILLAKQVGVPAMVVFLNKVDMVDDPDLLELVEMEVRELLSKYGFPGDEIPIIKGSALQALEGKPEGEEAINELMDAVDSYIPQPVRATDKPFLMPIEDVFSISGRGTVVTGRVESGIIKVGDEIEIVGLKDTQKTTCTGVEMFRKLLDEGQAGDNVGILLRGTKREEVERGQVLAKPGSIKPHDKFEAEVYVLSKEEGGRHTPFTNDYRPQFYFRTTDVTGTIKLPADKQMVMPGDNATFTVELIKPIAMQEGLKFSIREGGRTVGAGVVTKINN.

The tr-type G domain occupies 10–204 (KPHVNIGTIG…AVDSYIPQPV (195 aa)). The interval 19–26 (GHVDHGKT) is G1. A GTP-binding site is contributed by 19–26 (GHVDHGKT). A Mg(2+)-binding site is contributed by Thr26. A G2 region spans residues 60–64 (GITIS). Positions 81 to 84 (DCPG) are G3. Residues 81–85 (DCPGH) and 136–139 (NKVD) each bind GTP. The segment at 136–139 (NKVD) is G4. The tract at residues 174-176 (SAL) is G5.

The protein belongs to the TRAFAC class translation factor GTPase superfamily. Classic translation factor GTPase family. EF-Tu/EF-1A subfamily. Monomer.

It is found in the cytoplasm. The catalysed reaction is GTP + H2O = GDP + phosphate + H(+). In terms of biological role, GTP hydrolase that promotes the GTP-dependent binding of aminoacyl-tRNA to the A-site of ribosomes during protein biosynthesis. The polypeptide is Elongation factor Tu (Rickettsia massiliae (strain Mtu5)).